The chain runs to 423 residues: Mannose-6-phosphate isomerase (423 aa).

Residue Ala2 is modified to N-acetylalanine. Ser102 and Ser108 each carry phosphoserine. 4 residues coordinate Zn(2+): Gln110, His112, Glu137, and His276. Arg295 is a catalytic residue.

Belongs to the mannose-6-phosphate isomerase type 1 family. Zn(2+) is required as a cofactor.

It is found in the cytoplasm. It catalyses the reaction D-mannose 6-phosphate = D-fructose 6-phosphate. It functions in the pathway nucleotide-sugar biosynthesis; GDP-alpha-D-mannose biosynthesis; alpha-D-mannose 1-phosphate from D-fructose 6-phosphate: step 1/2. In terms of biological role, isomerase that catalyzes the interconversion of fructose-6-P and mannose-6-P and has a critical role in the supply of D-mannose derivatives required for many eukaryotic glycosylation reactions. The protein is Mannose-6-phosphate isomerase (MPI) of Macaca fascicularis (Crab-eating macaque).